A 319-amino-acid chain; its full sequence is Red chlorophyll catabolite reductase, chloroplastic (319 aa).

The N-terminal 39 residues, 1–39 (MAMIFCNTLYSSSSPSYLSPLTSKPSRFSKNLRPRAQFQ), are a transit peptide targeting the chloroplast. Red chlorophyll catabolite is bound by residues Glu-154 and 207–209 (YVS). Positions 255–286 (LERCVKEEEEKIVVGEEERMELERRDKSFRRK) form a coiled coil. Asp-291 serves as a coordination point for red chlorophyll catabolite.

Homodimer. Interacts with HCAR. Interacts with SGR1, NYC1, NOL, PPH, PAO and the LHCII complex. Part of a SGR1-CCE-LHCII complex, which acts in chlorophyll breakdown. Expressed in all tissues tested, including roots.

The protein localises to the plastid. The protein resides in the chloroplast stroma. It localises to the chloroplast thylakoid membrane. The catalysed reaction is primary fluorescent chlorophyll catabolite + 2 oxidized [2Fe-2S]-[ferredoxin] = red chlorophyll catabolite + 2 reduced [2Fe-2S]-[ferredoxin] + 3 H(+). Its pathway is porphyrin-containing compound metabolism; chlorophyll degradation. Its function is as follows. Catalyzes the key reaction of chlorophyll catabolism, porphyrin macrocycle cleavage of pheophorbide a (pheide a) to a primary fluorescent catabolite (pFCC). Works in a two-step reaction with pheophorbide a oxygenase (PaO) by reducing the C20/C1 double bond of the intermediate, RCC. Belongs to the chlorophyll catabolic enzymes (CCEs). The chain is Red chlorophyll catabolite reductase, chloroplastic from Arabidopsis thaliana (Mouse-ear cress).